The primary structure comprises 442 residues: Putative zinc metalloprotease PM1991 (442 aa).

His21 is a binding site for Zn(2+). Glu22 is an active-site residue. His25 lines the Zn(2+) pocket. A helical membrane pass occupies residues 97–119 (AFVIAAGPIANFLFAILAYFTIY). Residues 198 to 286 (DWRFDPEKES…FSFVVLTPEL (89 aa)) form the PDZ domain. The next 2 helical transmembrane spans lie at 366–388 (IGLIYYLGFMALISVNLGIMNLF) and 418–440 (LSYRIGAAILMALMGFALFNDFL).

Belongs to the peptidase M50B family. Zn(2+) is required as a cofactor.

It localises to the cell inner membrane. In Pasteurella multocida (strain Pm70), this protein is Putative zinc metalloprotease PM1991.